Reading from the N-terminus, the 233-residue chain is Adenosine 5'-phosphosulfate reductase (233 aa).

4 residues coordinate [4Fe-4S] cluster: Cys120, Cys121, Cys203, and Cys206. The Nucleophile; cysteine thiosulfonate intermediate role is filled by Cys229.

Belongs to the PAPS reductase family. CysH subfamily. [4Fe-4S] cluster is required as a cofactor.

It localises to the cytoplasm. The catalysed reaction is [thioredoxin]-disulfide + sulfite + AMP + 2 H(+) = adenosine 5'-phosphosulfate + [thioredoxin]-dithiol. It functions in the pathway sulfur metabolism; hydrogen sulfide biosynthesis; sulfite from sulfate. Catalyzes the formation of sulfite from adenosine 5'-phosphosulfate (APS) using thioredoxin as an electron donor. The protein is Adenosine 5'-phosphosulfate reductase of Bacillus velezensis (strain DSM 23117 / BGSC 10A6 / LMG 26770 / FZB42) (Bacillus amyloliquefaciens subsp. plantarum).